The primary structure comprises 101 residues: NADH-quinone oxidoreductase subunit K (101 aa).

3 helical membrane-spanning segments follow: residues 4 to 24 (LSHY…GIFI), 30 to 50 (IVIL…LVAF), and 65 to 85 (FVLT…VVFF).

It belongs to the complex I subunit 4L family. In terms of assembly, NDH-1 is composed of 14 different subunits. Subunits NuoA, H, J, K, L, M, N constitute the membrane sector of the complex.

The protein resides in the cell inner membrane. It carries out the reaction a quinone + NADH + 5 H(+)(in) = a quinol + NAD(+) + 4 H(+)(out). Its function is as follows. NDH-1 shuttles electrons from NADH, via FMN and iron-sulfur (Fe-S) centers, to quinones in the respiratory chain. The immediate electron acceptor for the enzyme in this species is believed to be ubiquinone. Couples the redox reaction to proton translocation (for every two electrons transferred, four hydrogen ions are translocated across the cytoplasmic membrane), and thus conserves the redox energy in a proton gradient. This Methylobacterium sp. (strain 4-46) protein is NADH-quinone oxidoreductase subunit K.